A 335-amino-acid polypeptide reads, in one-letter code: Mitochondrial fission regulator 1 (335 aa).

Residues 1-48 (MIRWFKCFMRMIFEQVGLNMESVLWSSKPYGSSRSIVRKIGTNLSLIQ) constitute a mitochondrion transit peptide. The stretch at 134 to 170 (RSTVIANEEAMQKISALENELATLRAQIAKIVILQEQ) forms a coiled coil. The interval 182–309 (ASAAVPCVPP…DKVIPKSETN (128 aa)) is necessary and sufficient to promote mitochondrial fission. Residues 219-240 (RKNRKTNSGPIPTENGPKKPEI) are disordered.

The protein belongs to the MTFR1 family. In terms of tissue distribution, widely expressed in embryonic tissues with higher expression in cartilage and hypertrophic chondrocytes. Specifically expressed in hypertrophic chondrocytes (at protein level).

It localises to the mitochondrion. Its function is as follows. May play a role in mitochondrial aerobic respiration. May also regulate mitochondrial organization and fission. This chain is Mitochondrial fission regulator 1 (MTFR1), found in Gallus gallus (Chicken).